The sequence spans 90 residues: Small ribosomal subunit protein uS19 (90 aa).

This sequence belongs to the universal ribosomal protein uS19 family.

Protein S19 forms a complex with S13 that binds strongly to the 16S ribosomal RNA. The chain is Small ribosomal subunit protein uS19 from Rhizorhabdus wittichii (strain DSM 6014 / CCUG 31198 / JCM 15750 / NBRC 105917 / EY 4224 / RW1) (Sphingomonas wittichii).